A 935-amino-acid polypeptide reads, in one-letter code: Progesterone receptor (935 aa).

Residues 1-49 (MTELKAKGXRAPHVAGSPSSPKVXSPLPCRQAAXPFPGSQTSDTLPEVS) form a disordered region. The AF3; mediates transcriptional activation stretch occupies residues 1-164 (MTELKAKGXR…SATQRVLSRL (164 aa)). The interval 1-568 (MTELKAKGXR…YSFESLPQKI (568 aa)) is modulating, Pro-Rich. A compositionally biased stretch (low complexity) spans 17–28 (SPSSPKVXSPLP). S20 carries the post-translational modification Phosphoserine. Residues 55–59 (LDGLL) carry the LXXL motif 1 motif. Residues 61–255 (PRICQGQDPP…GAAAGGGAAA (195 aa)) are disordered. The residue at position 81 (S81) is a Phosphoserine. The LXXL motif 2 motif lies at 115 to 119 (LDTLW). Residues S130 and S162 each carry the phosphoserine modification. Residues 165–305 (MSRSGGKAGD…LATTVTDFIH (141 aa)) form a mediates transcriptional transrepression region. Positions 183–187 (KVLPR) match the Nuclear localization signal motif. A Phosphoserine modification is found at S190. Over residues 191–203 (PSRQLLLPTTGSP) the composition is skewed to polar residues. S213 is modified (phosphoserine). Over residues 220-231 (EVEEEDGSESED) the composition is skewed to acidic residues. Residues 232–246 (SAGPLLKGKPRALGG) are compositionally biased toward low complexity. The residue at position 294 (S294) is a Phosphoserine; by MAPK1. The tract at residues 331-365 (GGAGAASAFAPPRSSPSASSTPVPGGDFPDCAYAP) is disordered. Positions 335-356 (AASAFAPPRSSPSASSTPVPGG) are enriched in low complexity. S345 carries the post-translational modification Phosphoserine; by MAPK. K388 is covalently cross-linked (Glycyl lysine isopeptide (Lys-Gly) (interchain with G-Cter in SUMO); alternate). Residue K388 forms a Glycyl lysine isopeptide (Lys-Gly) (interchain with G-Cter in ubiquitin); alternate linkage. Phosphoserine; by CDK2 is present on S400. The interval 415 to 452 (PDFPLGPPPPLPPRAPPSRPGEAAVTAAPASASVSSAS) is disordered. Residues 418–433 (PLGPPPPLPPRAPPSR) are compositionally biased toward pro residues. Residues 434–452 (PGEAAVTAAPASASVSSAS) are compositionally biased toward low complexity. Positions 456-548 (STLECILYKA…VYPPYLNYLR (93 aa)) are AF1; mediates transcriptional activation. Residue K533 forms a Glycyl lysine isopeptide (Lys-Gly) (interchain with G-Cter in SUMO) linkage. 2 NR C4-type zinc fingers span residues 569–589 (CLIC…CGSC) and 605–629 (CAGR…LRKC). Positions 569–641 (CLICGDEASG…AGMVLGGRKF (73 aa)) form a DNA-binding region, nuclear receptor. S678 carries the phosphoserine modification. The 235-residue stretch at 681 to 915 (QDIQLIPPLI…EFPEMMSEVI (235 aa)) folds into the NR LBD domain. Residues 689–935 (LINLLLSIEP…MVKPLLFHKK (247 aa)) are AF2; mediates transcriptional activation.

This sequence belongs to the nuclear hormone receptor family. As to quaternary structure, interacts with SMARD1 and UNC45A. Interacts with CUEDC2; the interaction promotes ubiquitination, decreases sumoylation, and represses transcriptional activity. Interacts with PIAS3; the interaction promotes sumoylation of PR in a hormone-dependent manner, inhibits DNA-binding, and alters nuclear export. Interacts with SP1; the interaction requires ligand-induced phosphorylation on Ser-345 by ERK1/2-MAPK. Interacts with PRMT2. Interacts with NCOA2 and NCOA1. Interacts with KLF9. Interacts with GTF2B. Post-translationally, phosphorylated on multiple serine sites. Several of these sites are hormone-dependent. Phosphorylation on Ser-294 is highly hormone-dependent and modulates ubiquitination and sumoylation on Lys-388. Phosphorylation on Ser-345 also requires induction by hormone. Basal phosphorylation on Ser-81, Ser-162, Ser-190 and Ser-400 is increased in response to progesterone and can be phosphorylated in vitro by the CDK2-A1 complex. Increased levels of phosphorylation on Ser-400 also in the presence of EGF, heregulin, IGF, PMA and FBS. Phosphorylation at this site by CDK2 is ligand-independent, and increases nuclear translocation and transcriptional activity. Phosphorylation at Ser-162 and Ser-294, but not at Ser-190, is impaired during the G(2)/M phase of the cell cycle. Phosphorylation on Ser-345 by ERK1/2 MAPK is required for interaction with SP1. In terms of processing, sumoylation is hormone-dependent and represses transcriptional activity. Sumoylation on all three sites is enhanced by PIAS3. Desumoylated by SENP1. Sumoylation on Lys-388, the main site of sumoylation, is repressed by ubiquitination on the same site, and modulated by phosphorylation at Ser-294. Ubiquitination is hormone-dependent and represses sumoylation on the same site. Promoted by MAPK-mediated phosphorylation on Ser-294. Post-translationally, palmitoylated by ZDHHC7 and ZDHHC21. Palmitoylation is required for plasma membrane targeting and for rapid intracellular signaling via ERK and AKT kinases and cAMP generation.

The protein resides in the nucleus. It localises to the cytoplasm. In terms of biological role, the steroid hormones and their receptors are involved in the regulation of eukaryotic gene expression and affect cellular proliferation and differentiation in target tissues. Transcriptional activator of several progesteron-dependent promoters in a variety of cell types. Involved in activation of SRC-dependent MAPK signaling on hormone stimulation. This Ateles paniscus (Black spider monkey) protein is Progesterone receptor (PGR).